The sequence spans 255 residues: NAD kinase (255 aa).

Asp-44 acts as the Proton acceptor in catalysis. NAD(+)-binding positions include 44–45, His-49, 114–115, Asp-144, Ala-152, 155–160, and Gln-216; these read DG, NE, and SAYNLS.

This sequence belongs to the NAD kinase family. A divalent metal cation is required as a cofactor.

Its subcellular location is the cytoplasm. It carries out the reaction NAD(+) + ATP = ADP + NADP(+) + H(+). Functionally, involved in the regulation of the intracellular balance of NAD and NADP, and is a key enzyme in the biosynthesis of NADP. Catalyzes specifically the phosphorylation on 2'-hydroxyl of the adenosine moiety of NAD to yield NADP. This chain is NAD kinase, found in Rickettsia africae (strain ESF-5).